A 352-amino-acid chain; its full sequence is Protein-glutamate methylesterase/protein-glutamine glutaminase 2 (352 aa).

The 119-residue stretch at 6-124 (KVLIVEDSLV…NAGYDTMAAK (119 aa)) folds into the Response regulatory domain. At Asp57 the chain carries 4-aspartylphosphate. The CheB-type methylesterase domain maps to 162 to 343 (PGTYSMVGIV…LPLPAIAARL (182 aa)). Catalysis depends on residues Ser173, His200, and Asp292.

Belongs to the CheB family. In terms of processing, phosphorylated by CheA. Phosphorylation of the N-terminal regulatory domain activates the methylesterase activity.

The protein resides in the cytoplasm. It carries out the reaction [protein]-L-glutamate 5-O-methyl ester + H2O = L-glutamyl-[protein] + methanol + H(+). The enzyme catalyses L-glutaminyl-[protein] + H2O = L-glutamyl-[protein] + NH4(+). Its function is as follows. Involved in chemotaxis. Part of a chemotaxis signal transduction system that modulates chemotaxis in response to various stimuli. Catalyzes the demethylation of specific methylglutamate residues introduced into the chemoreceptors (methyl-accepting chemotaxis proteins or MCP) by CheR. Also mediates the irreversible deamidation of specific glutamine residues to glutamic acid. This Paramagnetospirillum magneticum (strain ATCC 700264 / AMB-1) (Magnetospirillum magneticum) protein is Protein-glutamate methylesterase/protein-glutamine glutaminase 2.